Consider the following 1240-residue polypeptide: DNA excision repair protein ERCC-6-like (1240 aa).

A Phosphoserine modification is found at Ser14. One copy of the TPR 1 repeat lies at Tyr21–Lys54. The region spanning Ser110–Gly278 is the Helicase ATP-binding domain. ATP is bound at residue Asp123–Thr130. The short motif at Asp229 to His232 is the DEAH box element. Residues Phe467 to Phe631 enclose the Helicase C-terminal domain. The segment at Phe736–Lys760 is disordered. Positions Asn748–Lys760 are enriched in polar residues. A phosphoserine mark is found at Ser755 and Ser773. Residues Asp778–Ala813 are disordered. Positions Thr795 to Ala809 are enriched in polar residues. Position 821 is a phosphoserine (Ser821). Residues Gln845–Pro879 are disordered. Phosphoserine occurs at positions 966, 998, 1001, and 1021. A disordered region spans residues Lys974–Arg1085. Positions Leu978 to Ser998 are enriched in polar residues. Residues Ser1049–Ser1065 show a composition bias toward polar residues. Thr1057 is modified (phosphothreonine). A phosphoserine mark is found at Ser1092 and Ser1112. A compositionally biased stretch (acidic residues) spans Met1104–Glu1117. The tract at residues Met1104–Val1185 is disordered. Over residues Glu1135–Pro1165 the composition is skewed to polar residues. Phosphoserine is present on Ser1172. The TPR 2 repeat unit spans residues Tyr1191–Asp1224.

The protein belongs to the SNF2/RAD54 helicase family. In terms of assembly, interacts with PLK1, which phosphorylates it. Both proteins are mutually dependent on each other for correct subcellular localization. Interacts (via N-terminal TPR repeat) with BEND3 (via BEN domains 1 and 3); the interaction is direct. In terms of processing, phosphorylation by PLK1 prevents the association with chromosome arms and restricts its localization to the kinetochore-centromere region. Expressed mainly in the neural tube and heart of 10.5 dpc embryo. Significantly down-regulated after alcohol exposure in embryonic brain and heart, but not in embryonic kidney, liver, or lung.

It is found in the chromosome. The protein resides in the centromere. It localises to the kinetochore. The enzyme catalyses ATP + H2O = ADP + phosphate + H(+). Functionally, DNA helicase that acts as a tension sensor that associates with catenated DNA which is stretched under tension until it is resolved during anaphase. Functions as ATP-dependent DNA translocase. Can promote Holliday junction branch migration (in vitro). The chain is DNA excision repair protein ERCC-6-like (Ercc6l) from Mus musculus (Mouse).